A 98-amino-acid chain; its full sequence is Cell division topological specificity factor (98 aa).

The protein belongs to the MinE family.

Its function is as follows. Prevents the cell division inhibition by proteins MinC and MinD at internal division sites while permitting inhibition at polar sites. This ensures cell division at the proper site by restricting the formation of a division septum at the midpoint of the long axis of the cell. In Moorella thermoacetica (strain ATCC 39073 / JCM 9320), this protein is Cell division topological specificity factor.